The following is a 221-amino-acid chain: uncharacterized protein (221 aa).

The Extracellular portion of the chain corresponds to 1 to 45 (MYAPIRSPITELNESTPSSIPVATSYATCSASFAKLVALLVDDMA). A helical membrane pass occupies residues 46 to 66 (GLSIVLSEIYIYFKLLFLIVI). Residues 67–221 (TESIQNKLED…KYIVVIKVEQ (155 aa)) are Cytoplasmic-facing.

The protein resides in the host membrane. This is an uncharacterized protein from Acidianus filamentous virus 1 (isolate United States/Yellowstone) (AFV-1).